Reading from the N-terminus, the 429-residue chain is Dihydroorotase (429 aa).

Residues histidine 59 and histidine 61 each coordinate Zn(2+). Substrate is bound by residues 61–63 (HLR) and asparagine 93. The Zn(2+) site is built by lysine 143, histidine 171, histidine 229, and aspartate 298. At lysine 143 the chain carries N6-carboxylysine. Aspartate 298 is a catalytic residue. Substrate is bound by residues histidine 302 and 316–317 (AG).

The protein belongs to the metallo-dependent hydrolases superfamily. DHOase family. Class I DHOase subfamily. The cofactor is Zn(2+).

It carries out the reaction (S)-dihydroorotate + H2O = N-carbamoyl-L-aspartate + H(+). Its pathway is pyrimidine metabolism; UMP biosynthesis via de novo pathway; (S)-dihydroorotate from bicarbonate: step 3/3. Functionally, catalyzes the reversible cyclization of carbamoyl aspartate to dihydroorotate. The polypeptide is Dihydroorotase (Methanosphaera stadtmanae (strain ATCC 43021 / DSM 3091 / JCM 11832 / MCB-3)).